Consider the following 326-residue polypeptide: 4-hydroxy-3-methylbut-2-enyl diphosphate reductase (326 aa).

C22 contributes to the [4Fe-4S] cluster binding site. (2E)-4-hydroxy-3-methylbut-2-enyl diphosphate contacts are provided by H51 and H84. Residues H51 and H84 each contribute to the dimethylallyl diphosphate site. The isopentenyl diphosphate site is built by H51 and H84. C106 is a binding site for [4Fe-4S] cluster. H134 is a (2E)-4-hydroxy-3-methylbut-2-enyl diphosphate binding site. H134 contacts dimethylallyl diphosphate. Residue H134 participates in isopentenyl diphosphate binding. E136 functions as the Proton donor in the catalytic mechanism. T174 is a binding site for (2E)-4-hydroxy-3-methylbut-2-enyl diphosphate. C204 serves as a coordination point for [4Fe-4S] cluster. S232, S233, N234, and S276 together coordinate (2E)-4-hydroxy-3-methylbut-2-enyl diphosphate. The dimethylallyl diphosphate site is built by S232, S233, N234, and S276. Isopentenyl diphosphate is bound by residues S232, S233, N234, and S276.

This sequence belongs to the IspH family. The cofactor is [4Fe-4S] cluster.

The catalysed reaction is isopentenyl diphosphate + 2 oxidized [2Fe-2S]-[ferredoxin] + H2O = (2E)-4-hydroxy-3-methylbut-2-enyl diphosphate + 2 reduced [2Fe-2S]-[ferredoxin] + 2 H(+). The enzyme catalyses dimethylallyl diphosphate + 2 oxidized [2Fe-2S]-[ferredoxin] + H2O = (2E)-4-hydroxy-3-methylbut-2-enyl diphosphate + 2 reduced [2Fe-2S]-[ferredoxin] + 2 H(+). It participates in isoprenoid biosynthesis; dimethylallyl diphosphate biosynthesis; dimethylallyl diphosphate from (2E)-4-hydroxy-3-methylbutenyl diphosphate: step 1/1. It functions in the pathway isoprenoid biosynthesis; isopentenyl diphosphate biosynthesis via DXP pathway; isopentenyl diphosphate from 1-deoxy-D-xylulose 5-phosphate: step 6/6. Functionally, catalyzes the conversion of 1-hydroxy-2-methyl-2-(E)-butenyl 4-diphosphate (HMBPP) into a mixture of isopentenyl diphosphate (IPP) and dimethylallyl diphosphate (DMAPP). Acts in the terminal step of the DOXP/MEP pathway for isoprenoid precursor biosynthesis. This is 4-hydroxy-3-methylbut-2-enyl diphosphate reductase from Bordetella bronchiseptica (strain ATCC BAA-588 / NCTC 13252 / RB50) (Alcaligenes bronchisepticus).